We begin with the raw amino-acid sequence, 471 residues long: Putative multidrug resistance protein MdtD (471 aa).

Residues 1–11 lie on the Periplasmic side of the membrane; that stretch reads MTDLPDSTRWQ. The chain crosses the membrane as a helical span at residues 12 to 32; the sequence is LWIVAFGFFMQSLDTTIVNTA. Topologically, residues 33–48 are cytoplasmic; it reads LPSMAQSLGESPLHMH. A helical transmembrane segment spans residues 49 to 69; sequence MVIVSYVLTVAVMLPASGWLA. Topologically, residues 70–76 are periplasmic; sequence DKVGVRN. Residues 77–97 traverse the membrane as a helical segment; it reads IFFTAIVLFTLGSLFCALSGT. Topologically, residues 98–101 are cytoplasmic; it reads LNEL. Residues 102-124 form a helical membrane-spanning segment; sequence LLARALQGVGGAMMVPVGRLTVM. The Periplasmic segment spans residues 125-137; it reads KIVPREQYMAAMT. The helical transmembrane segment at 138–158 threads the bilayer; the sequence is FVTLPGQVGPLLGPALGGLLV. Residues 159 to 164 lie on the Cytoplasmic side of the membrane; that stretch reads EYASWH. Residues 165-185 traverse the membrane as a helical segment; it reads WIFLINIPVGIIGAIATLMLM. Residues 186-196 lie on the Periplasmic side of the membrane; sequence PNYTMQTRRFD. Residues 197 to 217 traverse the membrane as a helical segment; the sequence is LSGFLLLAVGMAVLTLALDGS. The Cytoplasmic segment spans residues 218–224; sequence KGTGLSP. The chain crosses the membrane as a helical span at residues 225–245; that stretch reads LAIAGLVAVGVVALVLYLLHA. Residues 246 to 262 lie on the Periplasmic side of the membrane; it reads RNNNRALFSLKLFRTRT. Residues 263–283 traverse the membrane as a helical segment; the sequence is FSLGLAGSFAGRIGSGMLPFM. The Cytoplasmic segment spans residues 284-285; that stretch reads TP. A helical transmembrane segment spans residues 286–306; that stretch reads VFLQIGLGFSPFHAGLMMIPM. The Periplasmic segment spans residues 307-341; sequence VLGSMGMKRIVVQVVNRFGYRRVLVATTLGLSLVT. Residues 342–362 traverse the membrane as a helical segment; the sequence is LLFMTTALLGWYYVLPFVLFL. At 363–395 the chain is on the cytoplasmic side; the sequence is QGMVNSTRFSSMNTLTLKDLPDNLASSGNSLLS. Residues 396–416 form a helical membrane-spanning segment; it reads MIMQLSMSIGVTIAGLLLGLF. Topologically, residues 417–430 are periplasmic; the sequence is GSQHVSVDSGTTQT. A helical transmembrane segment spans residues 431–451; it reads VFMYTWLSMAFIIALPAFIFA. Residues 452–471 lie on the Cytoplasmic side of the membrane; that stretch reads RVPNDTHQNVAISRRKRSAQ.

The protein belongs to the major facilitator superfamily. TCR/Tet family.

It is found in the cell inner membrane. This Escherichia coli (strain SMS-3-5 / SECEC) protein is Putative multidrug resistance protein MdtD.